A 322-amino-acid polypeptide reads, in one-letter code: NADH-quinone oxidoreductase subunit H (322 aa).

8 helical membrane passes run 15–35 (ILHITLIIIFIIFFAATLSIL), 82–102 (IFILSPIIAFVSLLLVIPTIP), 114–134 (IGILFFLMMASLSVYAVLFAG), 149–169 (ASAQTLSYEVFLGLSLMGVIA), 186–206 (VWNVIPQFFGFLCFFIAGIAL), 243–263 (ISIITVSALISTVFFGGYFGF), 265–285 (GSSFFWLFLKTVFFILIFILI), and 302–322 (WKICLPLTLLNLIITAFFILI).

This sequence belongs to the complex I subunit 1 family. As to quaternary structure, NDH-1 is composed of 13 different subunits. Subunits NuoA, H, J, K, L, M, N constitute the membrane sector of the complex.

Its subcellular location is the cell membrane. It carries out the reaction a quinone + NADH + 5 H(+)(in) = a quinol + NAD(+) + 4 H(+)(out). In terms of biological role, NDH-1 shuttles electrons from NADH, via FMN and iron-sulfur (Fe-S) centers, to quinones in the respiratory chain. The immediate electron acceptor for the enzyme in this species is believed to be ubiquinone. Couples the redox reaction to proton translocation (for every two electrons transferred, four hydrogen ions are translocated across the cytoplasmic membrane), and thus conserves the redox energy in a proton gradient. This subunit may bind ubiquinone. The chain is NADH-quinone oxidoreductase subunit H from Buchnera aphidicola subsp. Schizaphis graminum (strain Sg).